The primary structure comprises 306 residues: Putative dihydroorotate dehydrogenase A (fumarate) (306 aa).

FMN is bound by residues Ser20 and 44 to 45 (KG). Substrate contacts are provided by residues Lys44 and 68-72 (NSIGL). FMN is bound by residues Asn98 and Asn126. Asn126 lines the substrate pocket. Cys129 (nucleophile) is an active-site residue. 2 residues coordinate FMN: Lys164 and Ile190. Substrate is bound at residue 191-192 (NT). Residues Gly216, 244–245 (GG), and 266–267 (GT) contribute to the FMN site.

Belongs to the dihydroorotate dehydrogenase family. Type 1 subfamily. In terms of assembly, homodimer. It depends on FMN as a cofactor.

Its subcellular location is the cytoplasm. It catalyses the reaction (S)-dihydroorotate + fumarate = orotate + succinate. The protein operates within pyrimidine metabolism; UMP biosynthesis via de novo pathway. Functionally, catalyzes the conversion of dihydroorotate to orotate with fumarate as the electron acceptor. This is Putative dihydroorotate dehydrogenase A (fumarate) (pyrD) from Aquifex aeolicus (strain VF5).